Reading from the N-terminus, the 182-residue chain is Small ribosomal subunit protein uS4c (182 aa).

A disordered region spans residues 8-36; that stretch reads LGALPGLTSKRPGSGSDPKNKSRSGKRSQ. In terms of domain architecture, S4 RNA-binding spans 82–143; the sequence is MRLDNILFRL…KQRSKALIQN (62 aa).

The protein belongs to the universal ribosomal protein uS4 family. Part of the 30S ribosomal subunit. Contacts protein S5. The interaction surface between S4 and S5 is involved in control of translational fidelity.

Its subcellular location is the plastid. The protein resides in the chloroplast. In terms of biological role, one of the primary rRNA binding proteins, it binds directly to 16S rRNA where it nucleates assembly of the body of the 30S subunit. Functionally, with S5 and S12 plays an important role in translational accuracy. The sequence is that of Small ribosomal subunit protein uS4c (rps4) from Dietes robinsoniana (Lord Howe wedding lily).